The sequence spans 83 residues: Large ribosomal subunit protein bL27 (83 aa).

It belongs to the bacterial ribosomal protein bL27 family.

This is Large ribosomal subunit protein bL27 from Treponema denticola (strain ATCC 35405 / DSM 14222 / CIP 103919 / JCM 8153 / KCTC 15104).